The following is a 197-amino-acid chain: Holliday junction branch migration complex subunit RuvA (197 aa).

Positions 1-63 are domain I; that stretch reads MFEYLNGKLV…EDAHSLYGFV (63 aa). Residues 64–142 form a domain II region; that stretch reads NESEKALFLR…ATGAVGISLL (79 aa). Residues 142 to 146 form a flexible linker region; it reads LDAAP. The domain III stretch occupies residues 147–197; it reads ASNLALEEAIEALQALGYKATELKKIEKKLAQEAGLTSEEYIKSALKLMMK.

This sequence belongs to the RuvA family. In terms of assembly, homotetramer. Forms an RuvA(8)-RuvB(12)-Holliday junction (HJ) complex. HJ DNA is sandwiched between 2 RuvA tetramers; dsDNA enters through RuvA and exits via RuvB. An RuvB hexamer assembles on each DNA strand where it exits the tetramer. Each RuvB hexamer is contacted by two RuvA subunits (via domain III) on 2 adjacent RuvB subunits; this complex drives branch migration. In the full resolvosome a probable DNA-RuvA(4)-RuvB(12)-RuvC(2) complex forms which resolves the HJ.

It is found in the cytoplasm. Its function is as follows. The RuvA-RuvB-RuvC complex processes Holliday junction (HJ) DNA during genetic recombination and DNA repair, while the RuvA-RuvB complex plays an important role in the rescue of blocked DNA replication forks via replication fork reversal (RFR). RuvA specifically binds to HJ cruciform DNA, conferring on it an open structure. The RuvB hexamer acts as an ATP-dependent pump, pulling dsDNA into and through the RuvAB complex. HJ branch migration allows RuvC to scan DNA until it finds its consensus sequence, where it cleaves and resolves the cruciform DNA. In Lactococcus lactis subsp. cremoris (strain MG1363), this protein is Holliday junction branch migration complex subunit RuvA.